The primary structure comprises 333 residues: Chlorophyllide reductase 35.5 kDa chain (333 aa).

The segment covering 1 to 17 (MTDAPELKAFDQRLRDE) has biased composition (basic and acidic residues). Residues 1–30 (MTDAPELKAFDQRLRDEAAEEPTLEVPQGE) form a disordered region. Residues 45–50 (GIGKSF) and Lys-74 contribute to the ATP site. Residue Ser-49 participates in Mg(2+) binding. [4Fe-4S] cluster-binding residues include Cys-130 and Cys-165. Residue 219 to 220 (NK) coordinates ATP.

Belongs to the NifH/BchL/ChlL family. In terms of assembly, homodimer. Chlorophyllide reductase is composed of three subunits; BchX, BchY and BchZ. It depends on [4Fe-4S] cluster as a cofactor.

It carries out the reaction 3-deacetyl-3-vinylbacteriochlorophyllide a + 2 oxidized [2Fe-2S]-[ferredoxin] + ADP + phosphate = chlorophyllide a + 2 reduced [2Fe-2S]-[ferredoxin] + ATP + H2O + H(+). The enzyme catalyses bacteriochlorophyllide a + 2 oxidized [2Fe-2S]-[ferredoxin] + ADP + phosphate = 3-acetyl-3-devinylchlorophyllide a + 2 reduced [2Fe-2S]-[ferredoxin] + ATP + H2O + H(+). It catalyses the reaction 3-deacetyl-3-(1-hydroxyethyl)bacteriochlorophyllide a + 2 oxidized [2Fe-2S]-[ferredoxin] + ADP + phosphate = 3-devinyl-3-(1-hydroxyethyl)chlorophyllide a + 2 reduced [2Fe-2S]-[ferredoxin] + ATP + H2O + H(+). It functions in the pathway porphyrin-containing compound metabolism; bacteriochlorophyll biosynthesis. Converts chlorophylls (Chl) into bacteriochlorophylls (BChl) by reducing ring B of the tetrapyrrole. In Cereibacter sphaeroides (strain ATCC 17023 / DSM 158 / JCM 6121 / CCUG 31486 / LMG 2827 / NBRC 12203 / NCIMB 8253 / ATH 2.4.1.) (Rhodobacter sphaeroides), this protein is Chlorophyllide reductase 35.5 kDa chain (bchX).